The following is a 310-amino-acid chain: tRNA dimethylallyltransferase (310 aa).

Residue 9–16 participates in ATP binding; that stretch reads GPTAVGKT. 11–16 contacts substrate; sequence TAVGKT. The interval 34–37 is interaction with substrate tRNA; sequence DSMQ.

The protein belongs to the IPP transferase family. In terms of assembly, monomer. It depends on Mg(2+) as a cofactor.

The enzyme catalyses adenosine(37) in tRNA + dimethylallyl diphosphate = N(6)-dimethylallyladenosine(37) in tRNA + diphosphate. Functionally, catalyzes the transfer of a dimethylallyl group onto the adenine at position 37 in tRNAs that read codons beginning with uridine, leading to the formation of N6-(dimethylallyl)adenosine (i(6)A). This Syntrophomonas wolfei subsp. wolfei (strain DSM 2245B / Goettingen) protein is tRNA dimethylallyltransferase.